The primary structure comprises 104 residues: Histone H4 (104 aa).

The disordered stretch occupies residues 1-21; the sequence is MAGRGKVGKGYGKVGAKRHTK.

Belongs to the histone H4 family. In terms of assembly, the nucleosome is a histone octamer containing two molecules each of H2A, H2B, H3 and H4 assembled in one H3-H4 heterotetramer and two H2A-H2B heterodimers. The octamer wraps approximately 147 bp of DNA.

It is found in the nucleus. The protein localises to the chromosome. In terms of biological role, core component of nucleosome. Nucleosomes wrap and compact DNA into chromatin, limiting DNA accessibility to the cellular machineries which require DNA as a template. Histones thereby play a central role in transcription regulation, DNA repair, DNA replication and chromosomal stability. DNA accessibility is regulated via a complex set of post-translational modifications of histones, also called histone code, and nucleosome remodeling. The protein is Histone H4 of Sterkiella nova (Ciliate).